Reading from the N-terminus, the 78-residue chain is MSDVLERVSKIVIEHLDVEAEKVTDKASFIDDLGADSLDNVELVMAFEEEFDIEIPDDAAEHIQTVGDAVKFISEKVG.

The Carrier domain maps to 2–77 (SDVLERVSKI…DAVKFISEKV (76 aa)). An O-(pantetheine 4'-phosphoryl)serine modification is found at Ser-37.

Belongs to the acyl carrier protein (ACP) family. Post-translationally, 4'-phosphopantetheine is transferred from CoA to a specific serine of apo-ACP by AcpS. This modification is essential for activity because fatty acids are bound in thioester linkage to the sulfhydryl of the prosthetic group.

It localises to the cytoplasm. It participates in lipid metabolism; fatty acid biosynthesis. Carrier of the growing fatty acid chain in fatty acid biosynthesis. The protein is Acyl carrier protein of Maricaulis maris (strain MCS10) (Caulobacter maris).